The primary structure comprises 494 residues: 3-octaprenyl-4-hydroxybenzoate carboxy-lyase (494 aa).

Position 172 (N172) interacts with Mn(2+). Prenylated FMN contacts are provided by residues 175 to 177 (IYR), 189 to 191 (RWL), and 194 to 195 (RG). Residue E238 participates in Mn(2+) binding. D287 (proton donor) is an active-site residue.

Belongs to the UbiD family. Homohexamer. Requires prenylated FMN as cofactor. Mn(2+) serves as cofactor.

It is found in the cell membrane. The catalysed reaction is a 4-hydroxy-3-(all-trans-polyprenyl)benzoate + H(+) = a 2-(all-trans-polyprenyl)phenol + CO2. The protein operates within cofactor biosynthesis; ubiquinone biosynthesis. Functionally, catalyzes the decarboxylation of 3-octaprenyl-4-hydroxy benzoate to 2-octaprenylphenol, an intermediate step in ubiquinone biosynthesis. This is 3-octaprenyl-4-hydroxybenzoate carboxy-lyase from Citrobacter koseri (strain ATCC BAA-895 / CDC 4225-83 / SGSC4696).